The sequence spans 551 residues: Malate synthase, glyoxysomal (551 aa).

The Proton acceptor role is filled by Arg174. Asp458 (proton donor) is an active-site residue.

The protein belongs to the malate synthase family.

It localises to the glyoxysome. The catalysed reaction is glyoxylate + acetyl-CoA + H2O = (S)-malate + CoA + H(+). It functions in the pathway carbohydrate metabolism; glyoxylate cycle; (S)-malate from isocitrate: step 2/2. This is Malate synthase, glyoxysomal (PMS1) from Candida tropicalis (Yeast).